We begin with the raw amino-acid sequence, 202 residues long: Nigerythrin (202 aa).

Residues 23–168 (KTAVGSTLEN…AYNDIDAPDD (146 aa)) enclose the Ferritin-like diiron domain. Residues E40, E73, E115, E118, E149, H152, C174, C177, C189, and C192 each contribute to the Fe cation site. Residues 169 to 202 (DKFHLCPICGYIHKGEDFEKCPICFRPKDTFTAY) enclose the Rubredoxin-like domain.

As to quaternary structure, homodimer. May possess two rubredoxin-like centers and two hemerythrin-like binuclear-iron centers per dimer.

The protein localises to the cytoplasm. Its function is as follows. Exhibits NADH peroxidase activity (in vitro). The protein is Nigerythrin (ngr) of Nitratidesulfovibrio vulgaris (strain ATCC 29579 / DSM 644 / CCUG 34227 / NCIMB 8303 / VKM B-1760 / Hildenborough) (Desulfovibrio vulgaris).